Here is a 100-residue protein sequence, read N- to C-terminus: uncharacterized protein (100 aa).

As to quaternary structure, may interact with ribosomes.

This is an uncharacterized protein from Saccharomyces cerevisiae (strain ATCC 204508 / S288c) (Baker's yeast).